The following is a 224-amino-acid chain: Lipoprotein-releasing system ATP-binding protein LolD (224 aa).

Residues 4–224 enclose the ABC transporter domain; the sequence is LSIRNVFKSY…RLAGGEVSEA (221 aa). 40-47 contributes to the ATP binding site; that stretch reads GASGAGKS.

Belongs to the ABC transporter superfamily. Lipoprotein translocase (TC 3.A.1.125) family. As to quaternary structure, the complex is composed of two ATP-binding proteins (LolD) and two transmembrane proteins (LolC and LolE).

It localises to the cell inner membrane. Its function is as follows. Part of the ABC transporter complex LolCDE involved in the translocation of mature outer membrane-directed lipoproteins, from the inner membrane to the periplasmic chaperone, LolA. Responsible for the formation of the LolA-lipoprotein complex in an ATP-dependent manner. This chain is Lipoprotein-releasing system ATP-binding protein LolD, found in Myxococcus xanthus (strain DK1622).